A 1383-amino-acid chain; its full sequence is DNA-directed RNA polymerase subunit beta (1383 aa).

The protein belongs to the RNA polymerase beta chain family. As to quaternary structure, the RNAP catalytic core consists of 2 alpha, 1 beta, 1 beta' and 1 omega subunit. When a sigma factor is associated with the core the holoenzyme is formed, which can initiate transcription.

It catalyses the reaction RNA(n) + a ribonucleoside 5'-triphosphate = RNA(n+1) + diphosphate. DNA-dependent RNA polymerase catalyzes the transcription of DNA into RNA using the four ribonucleoside triphosphates as substrates. The polypeptide is DNA-directed RNA polymerase subunit beta (Xanthomonas axonopodis pv. citri (strain 306)).